The chain runs to 471 residues: Putative ETHYLENE INSENSITIVE 3-like 4 protein (471 aa).

Residues D280–C316 form a disordered region. Positions P304–C316 are enriched in polar residues.

This sequence belongs to the EIN3 family.

The protein resides in the nucleus. Putative transcription factor that may be involved in the ethylene response pathway. The protein is Putative ETHYLENE INSENSITIVE 3-like 4 protein (EIL4) of Arabidopsis thaliana (Mouse-ear cress).